Here is a 188-residue protein sequence, read N- to C-terminus: Photosystem I assembly protein Ycf4 (188 aa).

The next 2 helical transmembrane spans lie at 26–46 (YFWA…GLSS) and 68–88 (LVMG…WFVI).

The protein belongs to the Ycf4 family.

Its subcellular location is the cellular thylakoid membrane. Its function is as follows. Seems to be required for the assembly of the photosystem I complex. The protein is Photosystem I assembly protein Ycf4 of Synechococcus sp. (strain ATCC 27144 / PCC 6301 / SAUG 1402/1) (Anacystis nidulans).